Consider the following 364-residue polypeptide: Geranylfarnesyl diphosphate synthase, chloroplastic (364 aa).

A chloroplast-targeting transit peptide spans 1-51; that stretch reads MSHCTIFLYKYFPGKPRYQHCSFLHPLNHKLKSLFLPITGSRFLSNSTFSV. The isopentenyl diphosphate site is built by Lys-72, Lys-111, and His-143. Positions 150 and 156 each coordinate Mg(2+). A dimethylallyl diphosphate-binding site is contributed by Arg-161. Arg-162 provides a ligand contact to isopentenyl diphosphate. Lys-249, Thr-250, Gln-287, Asp-294, Lys-304, and Lys-314 together coordinate dimethylallyl diphosphate.

This sequence belongs to the FPP/GGPP synthase family. Monomer. Mg(2+) serves as cofactor. In terms of tissue distribution, strongly expressed in glandular trichomes, and, at low levels, in leaves, stems and flowers.

The protein resides in the plastid. The protein localises to the chloroplast. The enzyme catalyses isopentenyl diphosphate + (2E,6E,10E)-geranylgeranyl diphosphate = (2E,6E,10E,14E)-geranylfarnesyl diphosphate + diphosphate. It carries out the reaction 2 isopentenyl diphosphate + (2E,6E)-farnesyl diphosphate = (2E,6E,10E,14E)-geranylfarnesyl diphosphate + 2 diphosphate. It catalyses the reaction 3 isopentenyl diphosphate + (2E)-geranyl diphosphate = (2E,6E,10E,14E)-geranylfarnesyl diphosphate + 3 diphosphate. The catalysed reaction is 4 isopentenyl diphosphate + dimethylallyl diphosphate = (2E,6E,10E,14E)-geranylfarnesyl diphosphate + 4 diphosphate. The protein operates within secondary metabolite biosynthesis; terpenoid biosynthesis. Its pathway is isoprenoid biosynthesis. Its function is as follows. Involved in the biosynthesis of leucosceptrane sesterterpenoids natural products, which are playing defensive roles toward herbivorus insects (e.g. Spodoptera exigua). Catalyzes the condensation of isopentenyl pyrophosphate (IDP) with the allylic pyrophosphates to yield geranylfarnesyl diphosphate (GFDP), the C(25) prenyl diphosphate precursor to all sesterterpenoids. Geranylgeranyl diphosphate (GGPP) is the preferred substrate, however dimethylallyl diphosphate (DMADP), farnesyl diphosphate (FDP) and geranyl diphosphate (GDP) can also be used as allylic substrate. The protein is Geranylfarnesyl diphosphate synthase, chloroplastic of Leucosceptrum canum (Hairy white-wand).